Consider the following 279-residue polypeptide: Oxygen-dependent coproporphyrinogen-III oxidase (279 aa).

Ser102 contributes to the substrate binding site. The a divalent metal cation site is built by His106 and His116. His116 serves as the catalytic Proton donor. Position 118–120 (Asn118–Arg120) interacts with substrate. A divalent metal cation contacts are provided by His149 and His179. An important for dimerization region spans residues Tyr244–Asn279.

It belongs to the aerobic coproporphyrinogen-III oxidase family. As to quaternary structure, homodimer. The cofactor is a divalent metal cation.

The protein resides in the cytoplasm. It catalyses the reaction coproporphyrinogen III + O2 + 2 H(+) = protoporphyrinogen IX + 2 CO2 + 2 H2O. It functions in the pathway porphyrin-containing compound metabolism; protoporphyrin-IX biosynthesis; protoporphyrinogen-IX from coproporphyrinogen-III (O2 route): step 1/1. Functionally, involved in the heme biosynthesis. Catalyzes the aerobic oxidative decarboxylation of propionate groups of rings A and B of coproporphyrinogen-III to yield the vinyl groups in protoporphyrinogen-IX. This is Oxygen-dependent coproporphyrinogen-III oxidase from Rickettsia akari (strain Hartford).